The sequence spans 513 residues: Microtubule-associated protein 70-5 (513 aa).

Disordered regions lie at residues 1-20 (MTAA…SQLK), 60-81 (KLGA…LEEE), 347-367 (FLTS…GSVT), and 393-413 (ANGL…EDGN). Residues 9–18 (VSDTSSLQSQ) show a composition bias toward polar residues. Residues 10 to 322 (SDTSSLQSQL…LKLRLKTIED (313 aa)) adopt a coiled-coil conformation. The span at 60–80 (KLGATENQVDQKELERKKLEE) shows a compositional bias: basic and acidic residues. Positions 190-400 (FLEKINRQKV…ITANGLTDQH (211 aa)) are required for targeting to microtubules. A coiled-coil region spans residues 426–501 (DRLQKEVIAL…EESKLCRKAK (76 aa)).

It belongs to the MAP70 family. Interacts with MAP70.1 and itself.

It localises to the cytoplasm. The protein resides in the cytoskeleton. Plant-specific protein that interact with microtubules and regulates microtubule dynamics. May play a role in anisotropic cell expansion and organ growth. In association with MAP70.1, is essential for the normal banding pattern of secondary cell wall and for the proper development of xylem tracheary elements and wood formation. In Arabidopsis thaliana (Mouse-ear cress), this protein is Microtubule-associated protein 70-5 (MAP70.5).